A 342-amino-acid polypeptide reads, in one-letter code: Probable dual-specificity RNA methyltransferase RlmN (342 aa).

Residue Glu-91 is the Proton acceptor of the active site. One can recognise a Radical SAM core domain in the interval 97-326 (YRFGNTACVS…CTVRRELGSD (230 aa)). A disulfide bridge links Cys-104 with Cys-331. [4Fe-4S] cluster-binding residues include Cys-111, Cys-115, and Cys-118. Residues 157 to 158 (GE), Ser-189, 212 to 214 (SLH), and Asn-288 contribute to the S-adenosyl-L-methionine site. Cys-331 (S-methylcysteine intermediate) is an active-site residue.

This sequence belongs to the radical SAM superfamily. RlmN family. It depends on [4Fe-4S] cluster as a cofactor.

It localises to the cytoplasm. It catalyses the reaction adenosine(2503) in 23S rRNA + 2 reduced [2Fe-2S]-[ferredoxin] + 2 S-adenosyl-L-methionine = 2-methyladenosine(2503) in 23S rRNA + 5'-deoxyadenosine + L-methionine + 2 oxidized [2Fe-2S]-[ferredoxin] + S-adenosyl-L-homocysteine. It carries out the reaction adenosine(37) in tRNA + 2 reduced [2Fe-2S]-[ferredoxin] + 2 S-adenosyl-L-methionine = 2-methyladenosine(37) in tRNA + 5'-deoxyadenosine + L-methionine + 2 oxidized [2Fe-2S]-[ferredoxin] + S-adenosyl-L-homocysteine. Its function is as follows. Specifically methylates position 2 of adenine 2503 in 23S rRNA and position 2 of adenine 37 in tRNAs. The protein is Probable dual-specificity RNA methyltransferase RlmN of Thermoanaerobacter pseudethanolicus (strain ATCC 33223 / 39E) (Clostridium thermohydrosulfuricum).